A 408-amino-acid polypeptide reads, in one-letter code: tRNA-specific 2-thiouridylase MnmA (408 aa).

Residues 20–27 and Leu46 each bind ATP; that span reads AMSGGVDS. Cys114 (nucleophile) is an active-site residue. A disulfide bridge connects residues Cys114 and Cys210. Gly138 is a binding site for ATP. The tract at residues 160 to 162 is interaction with tRNA; that stretch reads RDQ. The Cysteine persulfide intermediate role is filled by Cys210.

It belongs to the MnmA/TRMU family.

The protein localises to the cytoplasm. The enzyme catalyses S-sulfanyl-L-cysteinyl-[protein] + uridine(34) in tRNA + AH2 + ATP = 2-thiouridine(34) in tRNA + L-cysteinyl-[protein] + A + AMP + diphosphate + H(+). Its function is as follows. Catalyzes the 2-thiolation of uridine at the wobble position (U34) of tRNA, leading to the formation of s(2)U34. This is tRNA-specific 2-thiouridylase MnmA from Bartonella quintana (strain Toulouse) (Rochalimaea quintana).